Consider the following 172-residue polypeptide: Large ribosomal subunit protein uL10 (172 aa).

This sequence belongs to the universal ribosomal protein uL10 family. Part of the ribosomal stalk of the 50S ribosomal subunit. The N-terminus interacts with L11 and the large rRNA to form the base of the stalk. The C-terminus forms an elongated spine to which L12 dimers bind in a sequential fashion forming a multimeric L10(L12)X complex.

In terms of biological role, forms part of the ribosomal stalk, playing a central role in the interaction of the ribosome with GTP-bound translation factors. The chain is Large ribosomal subunit protein uL10 from Chlorobium chlorochromatii (strain CaD3).